An 887-amino-acid polypeptide reads, in one-letter code: 3-hydroxy-3-methylglutaryl-coenzyme A reductase (887 aa).

The Cytoplasmic segment spans residues 1–9 (MLSRLFRMH). A helical membrane pass occupies residues 10-39 (GLFVASHPWEVIVGTVTLTICMMSMNMFTG). The Lumenal portion of the chain corresponds to 40-56 (NNKICGWNYECPKFEED). The chain crosses the membrane as a helical span at residues 57-78 (VLSSDIIILTITRCIAILYIYF). One can recognise an SSD domain in the interval 61 to 218 (DIIILTITRC…MTFFPACVSL (158 aa)). The INSIG-binding motif motif lies at 75 to 78 (YIYF). Topologically, residues 79 to 89 (QFQNLRQLGSK) are cytoplasmic. K89 is covalently cross-linked (Glycyl lysine isopeptide (Lys-Gly) (interchain with G-Cter in ubiquitin)). Residues 90–114 (YILGIAGLFTIFSSFVFSTVVIHFL) form a helical membrane-spanning segment. At 115-123 (DKELTGLNE) the chain is on the lumenal side. A helical transmembrane segment spans residues 124 to 149 (ALPFFLLLIDLSRASALAKFALSSNS). The Cytoplasmic segment spans residues 150 to 159 (QDEVRENIAR). A helical membrane pass occupies residues 160-187 (GMAILGPTFTLDALVECLVIGVGTMSGV). The Lumenal segment spans residues 188–191 (RQLE). A helical transmembrane segment spans residues 192 to 220 (IMCCFGCMSVLANYFVFMTFFPACVSLVL). Residues 221 to 248 (ELSRESREGRPIWQLSHFARVLEEEENK) are Cytoplasmic-facing. K248 participates in a covalent cross-link: Glycyl lysine isopeptide (Lys-Gly) (interchain with G-Cter in ubiquitin). The helical transmembrane segment at 249–275 (PNPVTQRVKMIMSLGLVLVHAHSRWIA) threads the bilayer. The Lumenal portion of the chain corresponds to 276–314 (DPSPQNSTAEQSKVSLGLAEDVSKRIEPSVSLWQFYLSK). N-linked (GlcNAc...) asparagine glycosylation occurs at N281. A helical membrane pass occupies residues 315–339 (MISMDIEQVITLSLALLLAVKYIFF). Residues 340–887 (EQAETESTLS…LQGTCTKKAA (548 aa)) are Cytoplasmic-facing. Catalysis depends on charge relay system residues E558, K690, and D766. H865 functions as the Proton donor in the catalytic mechanism. Phosphoserine; by AMPK is present on S871.

This sequence belongs to the HMG-CoA reductase family. In terms of assembly, homotetramer. Homodimer. Interacts (via its SSD) with INSIG1; the interaction, accelerated by sterols, leads to the recruitment of HMGCR to AMFR/gp78 for its ubiquitination by the sterol-mediated ERAD pathway. Interacts with UBIAD1. In terms of processing, undergoes sterol-mediated ubiquitination and ER-associated degradation (ERAD). Accumulation of sterols in the endoplasmic reticulum (ER) membrane, triggers binding of the reductase to the ER membrane protein INSIG1 or INSIG2. The INSIG1 binding leads to the recruitment of the ubiquitin ligase, AMFR/gp78, RNF139 or RNF145, initiating ubiquitination of the reductase. The ubiquitinated reductase is then extracted from the ER membrane and delivered to cytosolic 26S proteosomes by a mechanism probably mediated by the ATPase Valosin-containing protein VCP/p97. The INSIG2-binding leads to the recruitment of the ubiquitin ligase RNF139, initiating ubiquitination of the reductase. Lys-248 is the main site of ubiquitination. Ubiquitination is enhanced by the presence of a geranylgeranylated protein. Post-translationally, N-glycosylated. Deglycosylated by NGLY1 on release from the endoplasmic reticulum (ER) in a sterol-mediated manner. Phosphorylated. Phosphorylation at Ser-871 reduces the catalytic activity.

The protein localises to the endoplasmic reticulum membrane. Its subcellular location is the peroxisome membrane. The enzyme catalyses (R)-mevalonate + 2 NADP(+) + CoA = (3S)-3-hydroxy-3-methylglutaryl-CoA + 2 NADPH + 2 H(+). Its pathway is metabolic intermediate biosynthesis; (R)-mevalonate biosynthesis; (R)-mevalonate from acetyl-CoA: step 3/3. Regulated by a negative feedback mechanism through sterols and non-sterol metabolites derived from mevalonate. Phosphorylation at Ser-871 down-regulates the catalytic activity. Catalyzes the conversion of (3S)-hydroxy-3-methylglutaryl-CoA (HMG-CoA) to mevalonic acid, the rate-limiting step in the synthesis of cholesterol and other isoprenoids, thus plays a critical role in cellular cholesterol homeostasis. This is 3-hydroxy-3-methylglutaryl-coenzyme A reductase (Hmgcr) from Rattus norvegicus (Rat).